A 297-amino-acid polypeptide reads, in one-letter code: Bilin biosynthesis protein MpeU (297 aa).

Belongs to the CpcE/RpcE/PecE family.

Functionally, an enzyme involved in the biosynthesis of bilin. This chain is Bilin biosynthesis protein MpeU (mpeU), found in Synechococcus sp. (strain WH8020).